We begin with the raw amino-acid sequence, 177 residues long: Large ribosomal subunit protein uL6 (177 aa).

The protein belongs to the universal ribosomal protein uL6 family. Part of the 50S ribosomal subunit.

In terms of biological role, this protein binds to the 23S rRNA, and is important in its secondary structure. It is located near the subunit interface in the base of the L7/L12 stalk, and near the tRNA binding site of the peptidyltransferase center. The protein is Large ribosomal subunit protein uL6 of Vibrio cholerae serotype O1 (strain ATCC 39541 / Classical Ogawa 395 / O395).